Consider the following 238-residue polypeptide: Ion-translocating oxidoreductase complex subunit E (238 aa).

A run of 5 helical transmembrane segments spans residues 41 to 61 (LGLG…VSLV), 71 to 91 (LPAF…LMQA), 95 to 115 (ELYQ…VILG), 130 to 150 (SFDG…LGGL), and 184 to 204 (GFLL…LIAL).

Belongs to the NqrDE/RnfAE family. As to quaternary structure, the complex is composed of six subunits: RnfA, RnfB, RnfC, RnfD, RnfE and RnfG.

It is found in the cell inner membrane. In terms of biological role, part of a membrane-bound complex that couples electron transfer with translocation of ions across the membrane. This Pseudomonas aeruginosa (strain LESB58) protein is Ion-translocating oxidoreductase complex subunit E.